The sequence spans 117 residues: Large ribosomal subunit protein bL20c (117 aa).

The protein belongs to the bacterial ribosomal protein bL20 family.

The protein localises to the plastid. It is found in the chloroplast. Its function is as follows. Binds directly to 23S ribosomal RNA and is necessary for the in vitro assembly process of the 50S ribosomal subunit. It is not involved in the protein synthesizing functions of that subunit. The protein is Large ribosomal subunit protein bL20c of Lemna minor (Common duckweed).